We begin with the raw amino-acid sequence, 204 residues long: Photosynthetic NDH subunit of subcomplex B 3, chloroplastic (204 aa).

2 disordered regions span residues 1–24 (MGSV…FSHK) and 45–68 (KTVR…DEPP). The N-terminal 48 residues, 1 to 48 (MGSVQLSGSGLVASLPPNHSFSHKTKLNKPNSYFFRSKHNAARTKTVR), are a transit peptide targeting the chloroplast. The region spanning 76–180 (HSVLLPDGTP…STGLVVIQQL (105 aa)) is the 2Fe-2S ferredoxin-type domain. [2Fe-2S] cluster is bound by residues Cys-120, Cys-126, Cys-129, and Cys-162.

Part of the chloroplast NDH complex, composed of a mixture of chloroplast and nucleus encoded subunits. Component of the NDH subcomplex B, at least composed of PnsB1, PnsB2, PnsB3, PnsB4 and PnsB5.

Its subcellular location is the plastid. The protein localises to the chloroplast thylakoid membrane. Its function is as follows. NDH shuttles electrons from NAD(P)H:plastoquinone, via FMN and iron-sulfur (Fe-S) centers, to quinones in the photosynthetic chain and possibly in a chloroplast respiratory chain. The immediate electron acceptor for the enzyme in this species is believed to be plastoquinone. Couples the redox reaction to proton translocation, and thus conserves the redox energy in a proton gradient. The sequence is that of Photosynthetic NDH subunit of subcomplex B 3, chloroplastic from Arabidopsis thaliana (Mouse-ear cress).